The sequence spans 285 residues: Acetyl-coenzyme A carboxylase carboxyl transferase subunit beta (285 aa).

The 262-residue stretch at 24-285 folds into the CoA carboxyltransferase N-terminal domain; sequence GLWYKSPTGK…DLIQNQPVRA (262 aa).

Belongs to the AccD/PCCB family. Acetyl-CoA carboxylase is a heterohexamer composed of biotin carboxyl carrier protein (AccB), biotin carboxylase (AccC) and two subunits each of ACCase subunit alpha (AccA) and ACCase subunit beta (AccD).

The protein localises to the cytoplasm. The catalysed reaction is N(6)-carboxybiotinyl-L-lysyl-[protein] + acetyl-CoA = N(6)-biotinyl-L-lysyl-[protein] + malonyl-CoA. It participates in lipid metabolism; malonyl-CoA biosynthesis; malonyl-CoA from acetyl-CoA: step 1/1. Functionally, component of the acetyl coenzyme A carboxylase (ACC) complex. Biotin carboxylase (BC) catalyzes the carboxylation of biotin on its carrier protein (BCCP) and then the CO(2) group is transferred by the transcarboxylase to acetyl-CoA to form malonyl-CoA. This Christiangramia forsetii (strain DSM 17595 / CGMCC 1.15422 / KT0803) (Gramella forsetii) protein is Acetyl-coenzyme A carboxylase carboxyl transferase subunit beta.